The sequence spans 1021 residues: MAGISYVASFFLLLTKLSIGQREVTVQKGPLFRAEGYPVSIGCNVTGHQGPSEQHFQWSVYLPTNPTQEVQIISTKDAAFSYAVYTQRVRSGDVYVERVQGNSVLLHISKLQMKDAGEYECHTPNTDEKYYGSYSAKTNLIVIPDTLSATMSSQTLGKEEGEPLALTCEASKATAQHTHLSVTWYLTQDGGGSQATEIISLSKDFILVPGPLYTERFAASDVQLNKLGPTTFRLSIERLQSSDQGQLFCEATEWIQDPDETWMFITKKQTDQTTLRIQPAVKDFQVNITADSLFAEGKPLELVCLVVSSGRDPQLQGIWFFNGTEIAHIDAGGVLGLKNDYKERASQGELQVSKLGPKAFSLKIFSLGPEDEGAYRCVVAEVMKTRTGSWQVLQRKQSPDSHVHLRKPAARSVVMSTKNKQQVVWEGETLAFLCKAGGAESPLSVSWWHIPRDQTQPEFVAGMGQDGIVQLGASYGVPSYHGNTRLEKMDWATFQLEITFTAITDSGTYECRVSEKSRNQARDLSWTQKISVTVKSLESSLQVSLMSRQPQVMLTNTFDLSCVVRAGYSDLKVPLTVTWQFQPASSHIFHQLIRITHNGTIEWGNFLSRFQKKTKVSQSLFRSQLLVHDATEEETGVYQCEVEVYDRNSLYNNRPPRASAISHPLRIAVTLPESKLKVNSRSQVQELSINSNTDIECSILSRSNGNLQLAIIWYFSPVSTNASWLKILEMDQTNVIKTGDEFHTPQRKQKFHTEKVSQDLFQLHILNVEDSDRGKYHCAVEEWLLSTNGTWHKLGEKKSGLTELKLKPTGSKVRVSKVYWTENVTEHREVAIRCSLESVGSSATLYSVMWYWNRENSGSKLLVHLQHDGLLEYGEEGLRRHLHCYRSSSTDFVLKLHQVEMEDAGMYWCRVAEWQLHGHPSKWINQASDESQRMVLTVLPSEPTLPSRICSSAPLLYFLFICPFVLLLLLLISLLCLYWKARKLSTLRSNTRKEKALWVDLKEAGGVTTNRREDEEEDEGN.

A signal peptide spans 1 to 20 (MAGISYVASFFLLLTKLSIG). Residues 21–954 (QREVTVQKGP…LPSRICSSAP (934 aa)) lie on the Extracellular side of the membrane. Ig-like C2-type domains follow at residues 22 to 139 (REVT…AKTN), 144 to 265 (PDTL…WMFI), 279 to 389 (PAVK…RTGS), 408 to 525 (PAAR…RDLS), 541 to 651 (LQVS…NSLY), 656 to 794 (PRAS…WHKL), and 808 to 925 (PTGS…KWIN). 2 cysteine pairs are disulfide-bonded: C43–C121 and C168–C249. N44 is a glycosylation site (N-linked (GlcNAc...) asparagine). An EWI motif motif is present at residues 253 to 255 (EWI). Disulfide bonds link C304–C377, C434–C511, C562–C640, C697–C778, and C834–C909. N-linked (GlcNAc...) asparagine glycosylation is present at N322. A helical transmembrane segment spans residues 955 to 975 (LLYFLFICPFVLLLLLLISLL). The Cytoplasmic portion of the chain corresponds to 976-1021 (CLYWKARKLSTLRSNTRKEKALWVDLKEAGGVTTNRREDEEEDEGN).

Post-translationally, N-glycosylated. Expressed in lung, thymus and small intestine. Detected in cutaneous dendritic cells, activated T-cells, monocytes and granulocytes as well as with epithelial cells with dendritic morphology. Expressed in some leukemic cells, the CD4(+) CD56(+) blastic tumor cells, as well as in Langerhans cells from LCH (Langerhans cell histiocytosis) patients.

Its subcellular location is the membrane. Its function is as follows. Plays a role as inhibitor of T-cells proliferation induced by CD3. Inhibits expression of IL2RA on activated T-cells and secretion of IL2. Inhibits tyrosine kinases that are required for IL2 production and cellular proliferation. Inhibits phospholipase C-gamma-1/PLCG1 phosphorylation and subsequent CD3-induced changes in intracellular free calcium. Prevents nuclear translocation of nuclear factor of activated T-cell to the nucleus. Plays a role in the inhibition of T-cell proliferation via IL10 secretion by cutaneous dendritic cells. May be a marker of CD4(+) CD56(+) leukemic tumor cells. This is Immunoglobulin superfamily member 2 (CD101) from Homo sapiens (Human).